We begin with the raw amino-acid sequence, 270 residues long: MSNTSNSDPNSDIPFASSNVTLPSYNQNPRRKRTKLTNNEVGSSSSSPRPKPVTQPDPDASQIARPCTECGKQFGSLKALFGHMRCHPERQWRGINPPSNFKRRINSNAASSSSSWDPSEEEHNIASCLLMMANGDVPTRSSEVEERFECDGCKKVFGSHQALGGHRATHKDVKGCFANKNITEDPPPPPPQEIVDQDKGKSVKLVSGMNHRCNICSRVFSSGQALGGHMRCHWEKDQEENQVRGIDLNVPAATSSDTTLGCSLDLRLGL.

2 stretches are compositionally biased toward polar residues: residues 1–28 (MSNT…YNQN) and 36–48 (LTNN…SSSP). The segment at 1 to 64 (MSNTSNSDPN…QPDPDASQIA (64 aa)) is disordered. The C2H2-type 1 zinc finger occupies 65–87 (RPCTECGKQFGSLKALFGHMRCH). Residues 95 to 119 (INPPSNFKRRINSNAASSSSSWDPS) form a disordered region. A compositionally biased stretch (low complexity) spans 106-115 (NSNAASSSSS). 2 consecutive C2H2-type zinc fingers follow at residues 148–170 (FECD…RATH) and 211–233 (HRCN…MRCH).

As to quaternary structure, interacts (via the EAR motif) with TPL. As to expression, expressed exclusively in pollen.

It is found in the nucleus. In terms of biological role, mediates the regulation of male germ cell division by DUO1. This chain is Zinc finger protein ZAT2, found in Arabidopsis thaliana (Mouse-ear cress).